A 516-amino-acid chain; its full sequence is Golgin-84 (516 aa).

At 1–492 (MSSWITGLAD…TFLRRYPMMR (492 aa)) the chain is on the cytoplasmic side. A disordered region spans residues 28-80 (QTENATGSADPMRRSMTSSTQSLSTSLKSTLSPVRRSGANSSSSVKSDGGVSV). Positions 42 to 80 (SMTSSTQSLSTSLKSTLSPVRRSGANSSSSVKSDGGVSV) are enriched in low complexity. Phosphoserine occurs at positions 64 and 74. Residues 108–423 (TNELAAFKIA…KAQTQLQQNM (316 aa)) adopt a coiled-coil conformation. Residues 493–513 (VSVIVYVALLHLWVMFVLLST) traverse the membrane as a helical; Anchor for type IV membrane protein segment. Over 514-516 (TPN) the chain is Lumenal.

It localises to the golgi apparatus membrane. Functionally, may be involved in maintaining Golgi structure and in intra-Golgi transport. The chain is Golgin-84 (Golgin84) from Drosophila melanogaster (Fruit fly).